Reading from the N-terminus, the 484-residue chain is Gasdermin-D (484 aa).

A Phosphotyrosine modification is found at Y37. At C56 the chain carries S-(2-succinyl)cysteine. 2 consecutive transmembrane segments (beta stranded) span residues 91–97 (QGSVELA) and 103–108 (KIAGGA). Y158 is modified (phosphotyrosine). The next 2 beta stranded transmembrane spans lie at 180-186 (GSGRFSL) and 191-197 (CLQGEGQ). Residue S185 is modified to Phosphoserine. C191 and C268 each carry S-(2-succinyl)cysteine. C191 is lipidated: S-palmitoyl cysteine. Residues 277–296 (VPAEGAFTEDFQGLRAEVET) form a linker helix loop region. At C309 the chain carries S-(2-succinyl)cysteine. S338 carries O-linked (GlcNAc) serine glycosylation. C467 bears the S-(2-succinyl)cysteine mark.

The protein belongs to the gasdermin family. Homooligomer; homooligomeric ring-shaped pore complex containing 27-28 subunits when inserted in the membrane. Homooligomerization is promoted by the mTORC1 complex in macrophages. In response to a canonical inflammasome stimulus, such as nigericin, recruited to NLRP3 inflammasone with similar kinetics to that of uncleaved CASP1 precursor. Although this recruitment is also observed in the absence of PYCARD, it is more efficient in its presence. In terms of processing, cleavage at Asp-275 by CASP1 (mature and uncleaved precursor forms), CASP4, CASP5 or CASP8 relieves autoinhibition and is sufficient to initiate pyroptosis. Cleavage by CASP1 and CASP4 is not strictly dependent on the consensus cleavage site on GSDMD but depends on an exosite interface on CASP1 that recognizes and binds the Gasdermin-D, C-terminal (GSDMD-CT) part. Cleavage by CASP8 takes place following inactivation of MAP3K7/TAK1 by Yersinia toxin YopJ. Cleavage at Asp-87 by CASP3 or CASP7 inactivates the ability to mediate pyroptosis, but generates the Gasdermin-D, p13 chain, which translocates to the nucleus and acts as a transcription regulator. Cleavage by papain allergen generates the Gasdermin-D, p40 chain. Post-translationally, palmitoylated at Cys-191 by ZDHHC5 and ZDHHC9 in response to microbial infection and danger signals. Palmitoylation takes place before cleavage by caspases (CASP1, CASP4, CASP5 or CASP8) and is required for membrane translocation and pore formation. Depalmitoylated by LYPLA2. Succination of Cys-191 by the Krebs cycle intermediate fumarate, which leads to S-(2-succinyl)cysteine residues, inhibits processing by caspases, and ability to initiate pyroptosis. Succination modification is catalyzed by a non-enzymatic reaction caused by an accumulation of fumarate. In terms of processing, glycosylated: O-GlcNAcylation by OGT leads to reduced cleavage by CASP4 and decreased LPS-induced endothelial cell pyroptosis. Post-translationally, (Microbial infection) Cleaved and inactivated by Protease 3C from Human enterovirus 71 (EV71), preventing GSDMD-mediated pyroptosis. (Microbial infection) Cleaved and inactivated by the 3C-like proteinase nsp5 from human coronavirus SARS-CoV-2, preventing GSDMD-mediated pyroptosis. In terms of processing, (Microbial infection) Ubiquitinated by S.flexneri IpaH7.8, leading to its degradation by the proteasome. In terms of tissue distribution, expressed in the suprabasal cells of esophagus, as well as in the isthmus/neck, pit, and gland of the stomach, suggesting preferential expression in differentiating cells.

The protein resides in the cytoplasm. It localises to the cytosol. The protein localises to the inflammasome. Its subcellular location is the cell membrane. It is found in the secreted. The protein resides in the mitochondrion membrane. It localises to the nucleus. Its activity is regulated as follows. The full-length protein before cleavage is inactive: intramolecular interactions between N- and C-terminal domains mediate autoinhibition in the absence of activation signal. The intrinsic pyroptosis-inducing activity is carried by the released N-terminal moiety (Gasdermin-D, N-terminal) following cleavage by caspases CASP1, CASP4, CASP5 or CASP8. Cleavage at Asp-87 by CASP3 or CASP7 inactivates the ability to mediate pyroptosis. Homooligomerization and pore formation is specifically inhibited by VHH(GSDMD-1) and, to a lesser extent, VHH(GSDMD-2) nanobodies, protecting against excessive pyroptosis. Inhibited by small molecule NU6300, which covalently reacts with Cys-191, thereby preventing palmitoylation and pyroptosis. In terms of biological role, precursor of a pore-forming protein that plays a key role in host defense against pathogen infection and danger signals. This form constitutes the precursor of the pore-forming protein: upon cleavage, the released N-terminal moiety (Gasdermin-D, N-terminal) binds to membranes and forms pores, triggering pyroptosis. Promotes pyroptosis in response to microbial infection and danger signals. Produced by the cleavage of gasdermin-D by inflammatory caspases CASP1, CASP4 or CASP5 in response to canonical, as well as non-canonical (such as cytosolic LPS) inflammasome activators. After cleavage, moves to the plasma membrane where it strongly binds to inner leaflet lipids, including monophosphorylated phosphatidylinositols, such as phosphatidylinositol 4-phosphate, bisphosphorylated phosphatidylinositols, such as phosphatidylinositol (4,5)-bisphosphate, as well as phosphatidylinositol (3,4,5)-bisphosphate, and more weakly to phosphatidic acid and phosphatidylserine. Homooligomerizes within the membrane and forms pores of 10-15 nanometers (nm) of inner diameter, allowing the release of mature interleukin-1 (IL1B and IL18) and triggering pyroptosis. Gasdermin pores also allow the release of mature caspase-7 (CASP7). In some, but not all, cells types, pyroptosis is followed by pyroptotic cell death, which is caused by downstream activation of ninjurin-1 (NINJ1), which mediates membrane rupture (cytolysis). Also forms pores in the mitochondrial membrane, resulting in release of mitochondrial DNA (mtDNA) into the cytosol. Gasdermin-D, N-terminal released from pyroptotic cells into the extracellular milieu rapidly binds to and kills both Gram-negative and Gram-positive bacteria, without harming neighboring mammalian cells, as it does not disrupt the plasma membrane from the outside due to lipid-binding specificity. Under cell culture conditions, also active against intracellular bacteria, such as Listeria monocytogenes. Also active in response to MAP3K7/TAK1 inactivation by Yersinia toxin YopJ, which triggers cleavage by CASP8 and subsequent activation. Required for mucosal tissue defense against enteric pathogens. Activation of the non-canonical inflammasome in brain endothelial cells can lead to excessive pyroptosis, leading to blood-brain barrier breakdown. Strongly binds to bacterial and mitochondrial lipids, including cardiolipin. Does not bind to unphosphorylated phosphatidylinositol, phosphatidylethanolamine nor phosphatidylcholine. Its function is as follows. Transcription coactivator produced by the cleavage by CASP3 or CASP7 in the upper small intestine in response to dietary antigens. Required to maintain food tolerance in small intestine: translocates to the nucleus and acts as a coactivator for STAT1 to induce the transcription of CIITA and MHC class II molecules, which in turn induce type 1 regulatory T (Tr1) cells in upper small intestine. Functionally, produced by the cleavage by papain allergen. After cleavage, moves to the plasma membrane and homooligomerizes within the membrane and forms pores of 10-15 nanometers (nm) of inner diameter, allowing the specific release of mature interleukin-33 (IL33), promoting type 2 inflammatory immune response. The sequence is that of Gasdermin-D from Homo sapiens (Human).